We begin with the raw amino-acid sequence, 315 residues long: Hydrogenase-4 component C (315 aa).

Residues 1–10 (MRQTLCDGYL) lie on the Periplasmic side of the membrane. The chain crosses the membrane as a helical span at residues 11-31 (VIFALAQAVILLMLTPLFTGI). Topologically, residues 32–73 (SRQIRARMHSRRGPGIWQDYRDIHKLFKRQEVAPTSSGLMFR) are cytoplasmic. The helical transmembrane segment at 74-94 (LMPWVLISSMLVLAMALPLFI) threads the bilayer. Residues 95-98 (TVSP) lie on the Periplasmic side of the membrane. The helical transmembrane segment at 99-119 (FAGGGDLITLIYLLALFRFFF) threads the bilayer. At 120-140 (ALSGLDTGSPFAGVGASRELT) the chain is on the cytoplasmic side. A helical transmembrane segment spans residues 141–161 (LGILVEPMLILSLLVLALIAG). At 162–181 (STHIEMISNTLAMGWNSPLT) the chain is on the periplasmic side. Residues 182-202 (TVLALLACGFACFIEMGKIPF) form a helical membrane-spanning segment. At 203 to 228 (DVAEAEQELQEGPLTEYSGAGLALAK) the chain is on the cytoplasmic side. A helical membrane pass occupies residues 229–249 (WGLGLKQVVMASLFVALFLPF). Topologically, residues 250-256 (GRAQELS) are periplasmic. Residues 257 to 277 (LACLLTSLVVTLLKVLLIFVL) traverse the membrane as a helical segment. The Cytoplasmic segment spans residues 278–289 (ASIAENTLARGR). A helical membrane pass occupies residues 290–310 (FLLIHHVTWLGFSLAALAWVF). The Periplasmic portion of the chain corresponds to 311-315 (WLTGL).

Belongs to the complex I subunit 1 family.

The protein localises to the cell inner membrane. Functionally, possible component of hydrogenase 4. This chain is Hydrogenase-4 component C, found in Escherichia coli (strain K12).